The sequence spans 224 residues: MSLSNSLGLLGRKVGMMRLFTDDGDAVPVTVVDVSNNRVTQVKTQENDGYVALQVTFGSRKASRVTKPEAGHLAKAGVEAGEIIREFRVTAETAGKYATGAAVPVADVFSVGQKVDVQGTSIGKGYAGTIKRHNMASQRASHGNSRSHNVPGSIGMAQDPGRVFPGKRMTGHLGDATTTTQNLDVIRVDEARQLLLIKGAIPGSKGGFVTVRPAVKAKASQGAN.

Residue Gln158 is modified to N5-methylglutamine.

This sequence belongs to the universal ribosomal protein uL3 family. As to quaternary structure, part of the 50S ribosomal subunit. Forms a cluster with proteins L14 and L19. Methylated by PrmB.

In terms of biological role, one of the primary rRNA binding proteins, it binds directly near the 3'-end of the 23S rRNA, where it nucleates assembly of the 50S subunit. The sequence is that of Large ribosomal subunit protein uL3 from Paracidovorax citrulli (strain AAC00-1) (Acidovorax citrulli).